Consider the following 179-residue polypeptide: Chymotrypsin inhibitor ECI (179 aa).

Q1 is modified (pyrrolidone carboxylic acid). Disulfide bonds link C40–C84 and C134–C143.

It belongs to the protease inhibitor I3 (leguminous Kunitz-type inhibitor) family.

Inhibition of chymotrypsin. The sequence is that of Chymotrypsin inhibitor ECI from Erythrina variegata (Indian coral tree).